A 394-amino-acid chain; its full sequence is MAGAAMAERGRVPPPAPAPSTEGLPRAFLQSLRTLFDILDDRRRGCVHLREIESRWQGTDARELPRGVLEGLRQVAPASGYLTFERFVAGLRTSLLSADGGPRDPTRAPARPGDQPPPPPQRLVFAPADEPRTVLERKPLPLGVRAPLAGPSAAARSPEQLCAPAEAAPCPAEPERSQSAALEPSSSADAGAVACRALEADSGDARRAPRARGERRRHTIASGVDCGLLKQMKELEQEKEVLLQGLEMMARGRDWYQQQLQRVQERQRRLGQSRASADFGAAGSPRPLGRLLPKVQEVARCLGELLAAACASRALPPSSSGPPCPALTSTSPPVWQQQTILMLKEQNRLLTQEVTEKSERITQLEQEKSALIKQLFEARALSQQDGGPLDSTFI.

3 disordered regions span residues 1 to 23 (MAGA…STEG), 95 to 125 (LLSA…RLVF), and 150 to 188 (GPSA…SSSA). Residues 177 to 188 (SQSAALEPSSSA) show a composition bias toward polar residues. Threonine 219 is subject to Phosphothreonine. Residues 227–277 (GLLKQMKELEQEKEVLLQGLEMMARGRDWYQQQLQRVQERQRRLGQSRASA) adopt a coiled-coil conformation. Residue serine 284 is modified to Phosphoserine. Positions 336–384 (QQQTILMLKEQNRLLTQEVTEKSERITQLEQEKSALIKQLFEARALSQQ) form a coiled coil.

Interacts with a spindle orientation complex at least composed of GNAI1, GPSM2 and NUMA1. Interacts with GPSM2 (via TPR motifs); this interaction is required to prevent GPSM2 anchoring at the mitotic apical cortex and is inhibited in presence of NUMA1 in a dose dependent manner. Interacts with PARD3. In terms of tissue distribution, expressed in 5-month-old fetal tissues, including stomach, intestine, colon, liver, brain, lung, heart, spleen and kidney. Undetectable in non-cancerous adult tissues. Expressed in many primary gastric carcinoma, but almost not in adjacent normal mucosa. Expressed preferentially in M and G1 phases, compared to S and G2 phases. Expression is up-regulated in hepatocellular carcinoma (HCC) and colorectal cancer (CRC) tissues (at protein level).

The protein resides in the cytoplasm. The protein localises to the nucleus. It is found in the cell cortex. It localises to the apical cell membrane. Its subcellular location is the cell junction. The protein resides in the tight junction. Its function is as follows. Plays a role in planar mitotic spindle orientation in retinal progenitor cells (RPCs) and promotes the production of symmetric terminal divisions. Negatively regulates the mitotic apical cortex localization of GPSM2. Involved also in positive regulation of cell proliferation and tumor cell growth. In Homo sapiens (Human), this protein is Suppressor APC domain-containing protein 2.